Here is a 380-residue protein sequence, read N- to C-terminus: Erythronate-4-phosphate dehydrogenase (380 aa).

Positions 45 and 66 each coordinate substrate. NAD(+)-binding residues include Asp146 and Thr174. The active site involves Arg207. Asp231 lines the NAD(+) pocket. The active site involves Glu236. The Proton donor role is filled by His253. Gly256 serves as a coordination point for NAD(+). Tyr257 contributes to the substrate binding site.

This sequence belongs to the D-isomer specific 2-hydroxyacid dehydrogenase family. PdxB subfamily. In terms of assembly, homodimer.

Its subcellular location is the cytoplasm. The catalysed reaction is 4-phospho-D-erythronate + NAD(+) = (R)-3-hydroxy-2-oxo-4-phosphooxybutanoate + NADH + H(+). Its pathway is cofactor biosynthesis; pyridoxine 5'-phosphate biosynthesis; pyridoxine 5'-phosphate from D-erythrose 4-phosphate: step 2/5. Functionally, catalyzes the oxidation of erythronate-4-phosphate to 3-hydroxy-2-oxo-4-phosphonooxybutanoate. The protein is Erythronate-4-phosphate dehydrogenase of Pseudomonas fluorescens (strain Pf0-1).